The chain runs to 116 residues: Probable non-functional immunoglobulin kappa variable 3-7 (116 aa).

Positions 1–21 (MEAPAQLLFLLLLWLPDTTRE) are cleaved as a signal peptide. The tract at residues 21-43 (EIVMTQSPPTLSLSPGERVTLSC) is framework-1. Residues 22 to 116 (IVMTQSPPTL…YYCQQDYNLP (95 aa)) form the Ig-like domain. Cys-43 and Cys-109 are joined by a disulfide. Residues 44–55 (RASQSVSSSYLT) form a complementarity-determining-1 region. Residues 56-70 (WYQQKPGQAPRLLIY) form a framework-2 region. Positions 71–77 (GASTRAT) are complementarity-determining-2. Residues 78–109 (SIPARFSGSGSGTDFTLTISSLQPEDFAVYYC) are framework-3. The interval 110-116 (QQDYNLP) is complementarity-determining-3.

Immunoglobulins are composed of two identical heavy chains and two identical light chains; disulfide-linked.

The protein localises to the secreted. It is found in the cell membrane. Functionally, probable non-functional open reading frame (ORF) of V region of the variable domain of immunoglobulin light chains. Non-functional ORF generally cannot participate in the synthesis of a productive immunoglobulin chain due to altered V-(D)-J or switch recombination and/or splicing site (at mRNA level) and/or conserved amino acid change (protein level). Immunoglobulins, also known as antibodies, are membrane-bound or secreted glycoproteins produced by B lymphocytes. In the recognition phase of humoral immunity, the membrane-bound immunoglobulins serve as receptors which, upon binding of a specific antigen, trigger the clonal expansion and differentiation of B lymphocytes into immunoglobulins-secreting plasma cells. Secreted immunoglobulins mediate the effector phase of humoral immunity, which results in the elimination of bound antigens. The antigen binding site is formed by the variable domain of one heavy chain, together with that of its associated light chain. Thus, each immunoglobulin has two antigen binding sites with remarkable affinity for a particular antigen. The variable domains are assembled by a process called V-(D)-J rearrangement and can then be subjected to somatic hypermutations which, after exposure to antigen and selection, allow affinity maturation for a particular antigen. The protein is Probable non-functional immunoglobulin kappa variable 3-7 of Homo sapiens (Human).